Here is a 275-residue protein sequence, read N- to C-terminus: 4-hydroxy-tetrahydrodipicolinate reductase (275 aa).

NAD(+) is bound by residues 13-18 (GAAGKM) and 108-110 (GTT). Histidine 164 (proton donor/acceptor) is an active-site residue. (S)-2,3,4,5-tetrahydrodipicolinate is bound at residue histidine 165. Lysine 168 acts as the Proton donor in catalysis. 174–175 (GT) provides a ligand contact to (S)-2,3,4,5-tetrahydrodipicolinate.

This sequence belongs to the DapB family.

It is found in the cytoplasm. It catalyses the reaction (S)-2,3,4,5-tetrahydrodipicolinate + NAD(+) + H2O = (2S,4S)-4-hydroxy-2,3,4,5-tetrahydrodipicolinate + NADH + H(+). It carries out the reaction (S)-2,3,4,5-tetrahydrodipicolinate + NADP(+) + H2O = (2S,4S)-4-hydroxy-2,3,4,5-tetrahydrodipicolinate + NADPH + H(+). Its pathway is amino-acid biosynthesis; L-lysine biosynthesis via DAP pathway; (S)-tetrahydrodipicolinate from L-aspartate: step 4/4. Functionally, catalyzes the conversion of 4-hydroxy-tetrahydrodipicolinate (HTPA) to tetrahydrodipicolinate. The polypeptide is 4-hydroxy-tetrahydrodipicolinate reductase (Cyanothece sp. (strain PCC 7425 / ATCC 29141)).